A 310-amino-acid chain; its full sequence is tRNA dimethylallyltransferase (310 aa).

G15–T22 serves as a coordination point for ATP. T17–T22 contacts substrate.

Belongs to the IPP transferase family. Monomer. The cofactor is Mg(2+).

The catalysed reaction is adenosine(37) in tRNA + dimethylallyl diphosphate = N(6)-dimethylallyladenosine(37) in tRNA + diphosphate. Functionally, catalyzes the transfer of a dimethylallyl group onto the adenine at position 37 in tRNAs that read codons beginning with uridine, leading to the formation of N6-(dimethylallyl)adenosine (i(6)A). In Nocardioides sp. (strain ATCC BAA-499 / JS614), this protein is tRNA dimethylallyltransferase.